A 513-amino-acid chain; its full sequence is ATP synthase subunit alpha (513 aa).

169 to 176 (GDRQIGKT) contributes to the ATP binding site.

This sequence belongs to the ATPase alpha/beta chains family. As to quaternary structure, F-type ATPases have 2 components, CF(1) - the catalytic core - and CF(0) - the membrane proton channel. CF(1) has five subunits: alpha(3), beta(3), gamma(1), delta(1), epsilon(1). CF(0) has three main subunits: a(1), b(2) and c(9-12). The alpha and beta chains form an alternating ring which encloses part of the gamma chain. CF(1) is attached to CF(0) by a central stalk formed by the gamma and epsilon chains, while a peripheral stalk is formed by the delta and b chains.

It localises to the cell inner membrane. It carries out the reaction ATP + H2O + 4 H(+)(in) = ADP + phosphate + 5 H(+)(out). Its function is as follows. Produces ATP from ADP in the presence of a proton gradient across the membrane. The alpha chain is a regulatory subunit. This is ATP synthase subunit alpha from Shewanella woodyi (strain ATCC 51908 / MS32).